Consider the following 341-residue polypeptide: Galactofuranose transporter permease protein YtfT (341 aa).

Residues 1-25 (MMPQSLPDTTTPKRRFRWPTGMPQL) lie on the Cytoplasmic side of the membrane. A helical membrane pass occupies residues 26 to 46 (VALLLVLLVDSLVAPHFWQVV). The Periplasmic portion of the chain corresponds to 47–65 (LQDGRLFGSPIDILNRAAP). 2 helical membrane-spanning segments follow: residues 66-86 (VALL…DLSV) and 87-107 (GAVM…GFSL). Proline 108 is a topological domain (periplasmic). A helical membrane pass occupies residues 109-129 (IVLLSALGTGILAGLWNGILV). The Cytoplasmic segment spans residues 130–136 (AILKIQP). The chain crosses the membrane as a helical span at residues 137 to 157 (FVATLILMVAGRGVAQLITAG). Over 158–174 (QIVTFNSPDLSWFGSGS) the chain is Periplasmic. The helical transmembrane segment at 175-195 (LLFLPTPVIIAVLTLILFWLL) threads the bilayer. Residues 196–223 (TRKTALGMFIEAVGINIRAAKNAGVNTR) are Cytoplasmic-facing. A helical transmembrane segment spans residues 224–244 (IIVMLTYVLSGLCAAIAGIIV). Over 245–255 (AADIRGADANN) the chain is Periplasmic. A helical transmembrane segment spans residues 256-276 (AGLWLELDAILAVVIGGGSLM). The Cytoplasmic portion of the chain corresponds to 277-281 (GGRFN). Helical transmembrane passes span 282–302 (LLLS…ILLS) and 303–323 (GFPP…VLIV). Residues 324–341 (QSQRFISLIKGVRSRDKT) lie on the Cytoplasmic side of the membrane.

This sequence belongs to the binding-protein-dependent transport system permease family. AraH/RbsC subfamily. The complex is composed of two ATP-binding proteins (YtfR), two transmembrane proteins (YtfT and YjfF) and a solute-binding protein (YtfQ).

It is found in the cell inner membrane. Part of the ABC transporter complex YtfQRT-YjfF involved in galactofuranose transport. Probably responsible for the translocation of the substrate across the membrane. This is Galactofuranose transporter permease protein YtfT (ytfT) from Escherichia coli (strain K12).